Consider the following 133-residue polypeptide: Protein OPG104 (133 aa).

Residues 1-111 are Virion surface-facing; it reads MTDEQIYAFC…RYLNQEIRYP (111 aa). A helical; Signal-anchor membrane pass occupies residues 112-132; that stretch reads IIDIKWLPIGLLALAILILAF.

This sequence belongs to the orthopoxvirus OPG104 family. In terms of assembly, part of a stable entry-fusion complex (EFC) which is at least composed of proteins OPG143, OPG147, OPG155, OPG086, OPG094, OPG107, OPG104, and OPG099. Formation of the viral membrane is necessary for the assembly of the complex.

The protein localises to the virion membrane. Its function is as follows. Envelope protein part of the entry-fusion complex responsible for the virus membrane fusion with host cell membrane during virus entry. Also plays a role in cell-cell fusion (syncytium formation). The polypeptide is Protein OPG104 (OPG104) (Homo sapiens (Human)).